Consider the following 1592-residue polypeptide: ABC transporter ATP-binding protein/permease VMR1 (1592 aa).

The Vacuolar segment spans residues 1 to 33 (MGTDPLIIRNNGSFWEVDDFTRLGRTQLLSYYL). N11 carries N-linked (GlcNAc...) asparagine glycosylation. The helical transmembrane segment at 34 to 54 (PLAIIASIGIFALCRSGLSRY) threads the bilayer. Over 55–74 (VRSAECDLVNEYLFGAQEER) the chain is Cytoplasmic. Residues 75-95 (KEDNSIERLLRNSNTQANYVN) traverse the membrane as a helical segment. The Vacuolar portion of the chain corresponds to 96–100 (VKKQG). The helical transmembrane segment at 101 to 121 (RILKLRHFDITTIDVKQIDAK) threads the bilayer. At 122 to 131 (NHGGLTFSRP) the chain is on the cytoplasmic side. The helical transmembrane segment at 132 to 152 (STSDHLRKSSEIVLMSLQIIG) threads the bilayer. Residues 153–170 (LSFLRVTKINIELTNRDV) are Vacuolar-facing. Residues 171 to 191 (TTLLLFWLILLSLSILRVYKR) traverse the membrane as a helical segment. Over 192 to 329 (STNLWAICFT…NKHINNLTLA (138 aa)) the chain is Cytoplasmic. A helical membrane pass occupies residues 330–350 (LFESFKTYLLIGMLWVLVNSI). An ABC transmembrane type-1 1 domain is found at 338–632 (LLIGMLWVLV…LSNMLSFINQ (295 aa)). Residues 351-379 (VNLLPTILMKRFLEIVDNPNRSSSCMNLA) lie on the Vacuolar side of the membrane. N-linked (GlcNAc...) asparagine glycosylation occurs at N370. The chain crosses the membrane as a helical span at residues 380-400 (WLYIIGMFICRLTLAICNSQG). Residues 401–465 (QFVSDKICLR…SFKVSELANY (65 aa)) are Cytoplasmic-facing. The helical transmembrane segment at 466–486 (LYVTVQAVIMIIVVVGLLFNF) threads the bilayer. The Vacuolar segment spans residues 487–489 (LGV). A helical transmembrane segment spans residues 490-510 (SAFAGISIILVMFPLNFLLAN). Residues 511-572 (LLGKFQKQTL…SLLKKSLVWS (62 aa)) lie on the Cytoplasmic side of the membrane. A helical membrane pass occupies residues 573–593 (VTSFLWFVTPTLVTGVTFAIC). The Vacuolar portion of the chain corresponds to 594 to 614 (TFVQHEDLNAPLAFTTLSLFT). A helical transmembrane segment spans residues 615 to 635 (LLKTPLDQLSNMLSFINQSKV). Over 636 to 989 (SLKRISDFLR…ALTALFALYI (354 aa)) the chain is Cytoplasmic. The ABC transporter 1 domain occupies 664–908 (IEFKNATLTW…GLFKEKYVQL (245 aa)). 702 to 709 (GSTGSGKS) contacts ATP. The ABC transmembrane type-1 2 domain maps to 981–1282 (LTALFALYIT…LVRLYSTFEM (302 aa)). Residues 990 to 1010 (TAQILFISQSWWIRHWVNDTN) traverse the membrane as a helical segment. Over 1011 to 1051 (VRINAPGFAMDTLPLKGMTDSSKNKHNAFYYLTVYFLIGII) the chain is Vacuolar. The chain crosses the membrane as a helical span at residues 1052 to 1072 (QAMLGGFKTMMTFLSGMRASR). Residues 1073 to 1115 (KIFNNLLDLVLHAQIRFFDVTPVGRIMNRFSKDIEGVDQELIP) are Cytoplasmic-facing. Residues 1116–1136 (YLEVTIFCLIQCASIIFLITV) form a helical membrane-spanning segment. A topological domain (vacuolar) is located at residue I1137. The chain crosses the membrane as a helical span at residues 1138 to 1158 (TPRFLTVAVIVFVLYFFVGKW). Topologically, residues 1159 to 1229 (YLTASRELKR…VTVKWFSFRV (71 aa)) are cytoplasmic. The helical transmembrane segment at 1230 to 1250 (DMIGAFIVLASGSFILLNIAN) threads the bilayer. Over 1251–1252 (ID) the chain is Vacuolar. Residues 1253-1273 (SGLAGISLTYAILFTDGALWL) form a helical membrane-spanning segment. At 1274–1592 (VRLYSTFEMN…IAKQSSKMMK (319 aa)) the chain is on the cytoplasmic side. An ABC transporter 2 domain is found at 1323-1572 (IEIENLSLRY…ERGIFYSMCR (250 aa)). 1357-1364 (GRTGAGKS) serves as a coordination point for ATP.

It belongs to the ABC transporter superfamily. In terms of assembly, ABC transporter which may be involved in multidrug resistance.

It localises to the vacuole membrane. In Saccharomyces cerevisiae (strain ATCC 204508 / S288c) (Baker's yeast), this protein is ABC transporter ATP-binding protein/permease VMR1 (VMR1).